Consider the following 140-residue polypeptide: Ribosome-binding factor A (140 aa).

The disordered stretch occupies residues 116 to 140 (RERQERGEIPPGSDDAQNCHDDEPS).

This sequence belongs to the RbfA family. As to quaternary structure, monomer. Binds 30S ribosomal subunits, but not 50S ribosomal subunits or 70S ribosomes.

Its subcellular location is the cytoplasm. In terms of biological role, one of several proteins that assist in the late maturation steps of the functional core of the 30S ribosomal subunit. Associates with free 30S ribosomal subunits (but not with 30S subunits that are part of 70S ribosomes or polysomes). Required for efficient processing of 16S rRNA. May interact with the 5'-terminal helix region of 16S rRNA. The polypeptide is Ribosome-binding factor A (Synechococcus sp. (strain WH7803)).